A 408-amino-acid chain; its full sequence is Multidrug resistance protein MdtG (408 aa).

The next 11 helical transmembrane spans lie at 16 to 36 (LIVA…VMPF), 58 to 78 (IVFS…GGLA), 92 to 112 (LGMG…QFLI), 115 to 135 (ALLG…ATQV), 146 to 166 (TLST…GLLA), 173 to 193 (PVFF…LFCI), 224 to 244 (LFVT…ILTL), 256 to 276 (VAFI…LSAP), 290 to 310 (ILIT…YVQT), 319 to 339 (FLLG…LVYN), and 378 to 398 (AVFL…WNSL).

This sequence belongs to the major facilitator superfamily. DHA1 family. MdtG (TC 2.A.1.2.20) subfamily.

It localises to the cell inner membrane. In terms of biological role, confers resistance to fosfomycin and deoxycholate. The chain is Multidrug resistance protein MdtG from Escherichia coli O81 (strain ED1a).